A 243-amino-acid chain; its full sequence is 3-deoxy-manno-octulosonate cytidylyltransferase (243 aa).

Belongs to the KdsB family.

Its subcellular location is the cytoplasm. The enzyme catalyses 3-deoxy-alpha-D-manno-oct-2-ulosonate + CTP = CMP-3-deoxy-beta-D-manno-octulosonate + diphosphate. It participates in nucleotide-sugar biosynthesis; CMP-3-deoxy-D-manno-octulosonate biosynthesis; CMP-3-deoxy-D-manno-octulosonate from 3-deoxy-D-manno-octulosonate and CTP: step 1/1. The protein operates within bacterial outer membrane biogenesis; lipopolysaccharide biosynthesis. Its function is as follows. Activates KDO (a required 8-carbon sugar) for incorporation into bacterial lipopolysaccharide in Gram-negative bacteria. The polypeptide is 3-deoxy-manno-octulosonate cytidylyltransferase (Helicobacter pylori (strain HPAG1)).